The sequence spans 319 residues: 12-(S)-hydroxy-5,8,10,14-eicosatetraenoic acid receptor (319 aa).

Topologically, residues 1–16 (MERTNCSAASTVVETA) are extracellular. The N-linked (GlcNAc...) asparagine glycan is linked to Asn-5. The helical transmembrane segment at 17–37 (VGTMLTLECVLGLMGNAVALW) threads the bilayer. The Cytoplasmic portion of the chain corresponds to 38 to 52 (TFFYRLKVWKPYAVY). Residues 53–73 (LFNLVVADLLLATSLPFFAAF) traverse the membrane as a helical segment. The Extracellular portion of the chain corresponds to 74 to 91 (YLKGKTWKLGHMPCQVLL). The chain crosses the membrane as a helical span at residues 92–110 (FLLAFSRGVGVAFLTTVAL). Over 111 to 131 (DRYLRVVHPRLRVNLLSLRAA) the chain is Cytoplasmic. Residues 132–152 (WGISSLIWLLMVVLTPQNLLT) form a helical membrane-spanning segment. Topologically, residues 153–180 (CRTTQNSTECPSFYPTGGAKAIATCQEV) are extracellular. Residues 181–201 (LFFLQVLLPFGLISFCNSGLI) traverse the membrane as a helical segment. Residues 202 to 219 (RTLQKRLRESDKQPRIRR) are Cytoplasmic-facing. A helical transmembrane segment spans residues 220–240 (ARVLVAIVLLLFGLCFLPSVL). Residues 241-265 (TRVLVHIFQEFKSCSVQQAIVRASD) are Extracellular-facing. The chain crosses the membrane as a helical span at residues 266–284 (IAGSLTCLHSTLSPAIYCF). Residues 285 to 319 (SNPAFTHSYRKVLKSLRGRRKAAESPSDNLRDSYS) are Cytoplasmic-facing.

It belongs to the G-protein coupled receptor 1 family. In terms of assembly, interacts with KRAS; in a farnesylation-dependent manner.

It localises to the cell membrane. Its function is as follows. High-affinity receptor for 12-(S)-hydroxy-5,8,10,14-eicosatetraenoic acid (12-S-HETE), with much lower affinities for other HETE isomers. 12-S-HETE is a eicosanoid, a 12-lipoxygenase (ALOX12) metabolite of arachidonic acid, involved in many physiologic and pathologic processes, such as cell growth, adhesion, inflammation and cancer promotion. 12-S-HETE-binding leads to activation of ERK1/2 (MAPK3/MAPK1), MEK, and NF-kappa-B pathways and leads to cell growth. Plays a crucial role for proliferation, survival and macropinocytosis of KRAS-dependent cancer cells by mediating the translocation of KRAS from the endoplasmic reticulum to the plasma membrane (PM) and its association with the PM. Contributes to enhanced immune responses by inducing dendrite protrusion of small intestinal CX3CR1(+) phagocytes for the uptake of luminal antigens. Also acts as a key receptor for 12-(S)-HETE-mediated liver ischemia reperfusion injury. Functionally, proton-sensing G protein-coupled receptor. The chain is 12-(S)-hydroxy-5,8,10,14-eicosatetraenoic acid receptor (Gpr31) from Mus musculus (Mouse).